Consider the following 454-residue polypeptide: Tubulin alpha-A chain (454 aa).

GTP is bound by residues Q12, D72, S141, G145, T146, T180, N207, and N229. D72 is a binding site for Mg(2+). E255 is a catalytic residue.

It belongs to the tubulin family. Dimer of alpha and beta chains. A typical microtubule is a hollow water-filled tube with an outer diameter of 25 nm and an inner diameter of 15 nM. Alpha-beta heterodimers associate head-to-tail to form protofilaments running lengthwise along the microtubule wall with the beta-tubulin subunit facing the microtubule plus end conferring a structural polarity. Microtubules usually have 13 protofilaments but different protofilament numbers can be found in some organisms and specialized cells. Mg(2+) is required as a cofactor.

It is found in the cytoplasm. Its subcellular location is the cytoskeleton. The enzyme catalyses GTP + H2O = GDP + phosphate + H(+). Its function is as follows. Tubulin is the major constituent of microtubules, a cylinder consisting of laterally associated linear protofilaments composed of alpha- and beta-tubulin heterodimers. Microtubules grow by the addition of GTP-tubulin dimers to the microtubule end, where a stabilizing cap forms. Below the cap, tubulin dimers are in GDP-bound state, owing to GTPase activity of alpha-tubulin. This is Tubulin alpha-A chain (tba-1) from Neurospora crassa (strain ATCC 24698 / 74-OR23-1A / CBS 708.71 / DSM 1257 / FGSC 987).